We begin with the raw amino-acid sequence, 267 residues long: Orotidine 5'-phosphate decarboxylase (267 aa).

Ser-2 is modified (N-acetylserine). Substrate contacts are provided by residues Asp-37, 59–61, and 91–100; these read KTH and DRKFADIGNT. Catalysis depends on Lys-93, which acts as the Proton donor. Glycyl lysine isopeptide (Lys-Gly) (interchain with G-Cter in ubiquitin) cross-links involve residues Lys-93 and Lys-209. Tyr-217 and Arg-235 together coordinate substrate. Lys-253 participates in a covalent cross-link: Glycyl lysine isopeptide (Lys-Gly) (interchain with G-Cter in ubiquitin).

Belongs to the OMP decarboxylase family.

The catalysed reaction is orotidine 5'-phosphate + H(+) = UMP + CO2. It participates in pyrimidine metabolism; UMP biosynthesis via de novo pathway; UMP from orotate: step 2/2. This Saccharomyces cerevisiae (strain ATCC 204508 / S288c) (Baker's yeast) protein is Orotidine 5'-phosphate decarboxylase (URA3).